Reading from the N-terminus, the 499-residue chain is Cytochrome P450 monooxygenase notH' (499 aa).

The chain crosses the membrane as a helical span at residues 11–31; the sequence is LGLEPAGWALALLTSSIIYLF. N-linked (GlcNAc...) asparagine glycosylation is found at asparagine 296 and asparagine 427. Residue cysteine 440 participates in heme binding.

It belongs to the cytochrome P450 family. Requires heme as cofactor.

It is found in the membrane. Its pathway is alkaloid biosynthesis. Cytochrome P450 monooxygenase; part of the gene cluster that mediates the biosynthesis of notoamide, a fungal indole alkaloid that belongs to a family of natural products containing a characteristic bicyclo[2.2.2]diazaoctane core. The first step of notoamide biosynthesis involves coupling of L-proline and L-tryptophan by the bimodular NRPS notE', to produce cyclo-L-tryptophan-L-proline called brevianamide F. The reverse prenyltransferase notF' then acts as a deoxybrevianamide E synthase and converts brevianamide F to deoxybrevianamide E via reverse prenylation at C-2 of the indole ring leading to the bicyclo[2.2.2]diazaoctane core. Deoxybrevianamide E is further hydroxylated at C-6 of the indole ring, likely catalyzed by the cytochrome P450 monooxygenase notG', to yield 6-hydroxy-deoxybrevianamide E. 6-hydroxy-deoxybrevianamide E is a specific substrate of the prenyltransferase notC' for normal prenylation at C-7 to produce 6-hydroxy-7-prenyl-deoxybrevianamide, also called notoamide S. As the proposed pivotal branching point in notoamide biosynthesis, notoamide S can be diverted to notoamide E through an oxidative pyran ring closure putatively catalyzed by either notH' cytochrome P450 monooxygenase or the notD' FAD-linked oxidoreductase. This step would be followed by an indole 2,3-epoxidation-initiated pinacol-like rearrangement catalyzed by the notB' FAD-dependent monooxygenase leading to the formation of notoamide C and notoamide D. On the other hand notoamide S is converted to notoamide T by notH' (or notD'), a bifunctional oxidase that also functions as the intramolecular Diels-Alderase responsible for generation of (-)-notoamide T. To generate antipodal (+)-notoaminide T, notH (or notD) in Aspergillus strain MF297-2 is expected to catalyze a Diels-Alder reaction leading to the opposite stereochemistry. The remaining oxidoreductase notD' (or notH') likely catalyzes the oxidative pyran ring formation to yield (-)-stephacidin A. The FAD-dependent monooxygenase notI' is highly similar to notB' and is predicted to catalyze a similar conversion from (-)-stephacidin A to (+)-notoamide B via the 2,3-epoxidation of (-)-stephacidin A followed by a pinacol-type rearrangement. Finally, it remains unclear which enzyme could be responsible for the final hydroxylation steps leading to notoamide A and sclerotiamide. The chain is Cytochrome P450 monooxygenase notH' from Aspergillus versicolor.